Reading from the N-terminus, the 165-residue chain is NADH-quinone oxidoreductase subunit I (165 aa).

4Fe-4S ferredoxin-type domains lie at 57-86 and 96-125; these read RRYD…IESE and SRYD…ETHI. Residues C66, C69, C72, C76, C105, C108, C111, and C115 each contribute to the [4Fe-4S] cluster site.

It belongs to the complex I 23 kDa subunit family. As to quaternary structure, NDH-1 is composed of 14 different subunits. Subunits NuoA, H, J, K, L, M, N constitute the membrane sector of the complex. Requires [4Fe-4S] cluster as cofactor.

The protein resides in the cell inner membrane. The enzyme catalyses a quinone + NADH + 5 H(+)(in) = a quinol + NAD(+) + 4 H(+)(out). In terms of biological role, NDH-1 shuttles electrons from NADH, via FMN and iron-sulfur (Fe-S) centers, to quinones in the respiratory chain. The immediate electron acceptor for the enzyme in this species is believed to be ubiquinone. Couples the redox reaction to proton translocation (for every two electrons transferred, four hydrogen ions are translocated across the cytoplasmic membrane), and thus conserves the redox energy in a proton gradient. The sequence is that of NADH-quinone oxidoreductase subunit I from Polaromonas sp. (strain JS666 / ATCC BAA-500).